The following is a 213-amino-acid chain: Large ribosomal subunit protein uL3 (213 aa).

A disordered region spans residues 135–155 (THGSKNHRLPGSTGAGTTPGR).

Belongs to the universal ribosomal protein uL3 family. Part of the 50S ribosomal subunit. Forms a cluster with proteins L14 and L19.

Functionally, one of the primary rRNA binding proteins, it binds directly near the 3'-end of the 23S rRNA, where it nucleates assembly of the 50S subunit. This is Large ribosomal subunit protein uL3 from Synechocystis sp. (strain ATCC 27184 / PCC 6803 / Kazusa).